A 341-amino-acid polypeptide reads, in one-letter code: Trans-3-hydroxy-L-proline dehydratase (341 aa).

The active-site Proton acceptor is the serine 90. Residues 91–92, aspartate 252, and 257–258 contribute to the substrate site; these read GS and GT.

The protein belongs to the proline racemase family.

The catalysed reaction is trans-3-hydroxy-L-proline = 1-pyrroline-2-carboxylate + H2O. In terms of biological role, catalyzes the dehydration of trans-3-hydroxy-L-proline (t3LHyp) to Delta(1)-pyrroline-2-carboxylate (Pyr2C). May be involved in a degradation pathway of t3LHyp, which would allow L.aggregata to grow on t3LHyp as a sole carbon source. Displays neither proline racemase activity nor 4-hydroxyproline 2-epimerase activity. The protein is Trans-3-hydroxy-L-proline dehydratase of Roseibium aggregatum (strain ATCC 25650 / DSM 13394 / JCM 20685 / NBRC 16684 / NCIMB 2208 / IAM 12614 / B1) (Stappia aggregata).